The primary structure comprises 467 residues: Cysteine protease ATG4a (467 aa).

The disordered stretch occupies residues 1–35 (MKALCDRFVPQQCSSSSKSDTHDKSPLVSDSGPSD). Cysteine 170 functions as the Nucleophile in the catalytic mechanism. Catalysis depends on residues aspartate 364 and histidine 366. Positions 448–467 (NYGFADDDSEDEREDDWQML) are disordered. Positions 452-467 (ADDDSEDEREDDWQML) are enriched in acidic residues.

The protein belongs to the peptidase C54 family. As to quaternary structure, interacts with ATG8. In terms of tissue distribution, constitutively expressed.

It localises to the cytoplasm. The enzyme catalyses [protein]-C-terminal L-amino acid-glycyl-phosphatidylethanolamide + H2O = [protein]-C-terminal L-amino acid-glycine + a 1,2-diacyl-sn-glycero-3-phosphoethanolamine. Cysteine protease that plays a key role in autophagy by mediating both proteolytic activation and delipidation of ATG8 family proteins. The protease activity is required for proteolytic activation of ATG8 family proteins: cleaves the C-terminal amino acid of ATG8 proteins to reveal a C-terminal glycine. Exposure of the glycine at the C-terminus is essential for ATG8 proteins conjugation to phosphatidylethanolamine (PE) and insertion to membranes, which is necessary for autophagy. In addition to the protease activity, also mediates delipidation of PE-conjugated ATG8 proteins. The sequence is that of Cysteine protease ATG4a from Arabidopsis thaliana (Mouse-ear cress).